Reading from the N-terminus, the 374-residue chain is Pectate lyase 3 (374 aa).

The N-terminal stretch at 1-22 is a signal peptide; it reads MKYLLPSAAAGLLLLAAQPTMA. Cys-93 and Cys-176 are oxidised to a cystine. Ca(2+)-binding residues include Asp-150, Asp-152, Glu-187, and Asp-191. The active site involves Arg-239. Cys-350 and Cys-373 form a disulfide bridge.

It belongs to the polysaccharide lyase 1 family. PLADES subfamily. Requires Ca(2+) as cofactor.

Its subcellular location is the secreted. It carries out the reaction Eliminative cleavage of (1-&gt;4)-alpha-D-galacturonan to give oligosaccharides with 4-deoxy-alpha-D-galact-4-enuronosyl groups at their non-reducing ends.. Its pathway is glycan metabolism; pectin degradation; 2-dehydro-3-deoxy-D-gluconate from pectin: step 2/5. Its function is as follows. Involved in maceration and soft-rotting of plant tissue. This chain is Pectate lyase 3 (pel3), found in Pectobacterium carotovorum (Erwinia carotovora).